The following is a 118-amino-acid chain: T cell receptor gamma variable 2 (118 aa).

An N-terminal signal peptide occupies residues M1 to Q17. The Ig-like domain maps to K18–G118. C41 and C113 are joined by a disulfide.

As to quaternary structure, gamma-delta TR is a heterodimer composed of a gamma and delta chain; disulfide-linked. The gamma-delta TR is associated with the transmembrane signaling CD3 coreceptor proteins following the stoichiometry: a single gamma-delta TR heterodimer associates with one CD3D-CD3E heterodimer, one CD3G-CD3E heterodimer and one CD247 homodimer forming a stable octameric structure. Upon activation, gamma-delta TR complex associates with FCER1G to initiate intracellular signaling.

It is found in the cell membrane. In terms of biological role, v region of the variable domain of T cell receptor (TR) gamma chain that participates in the antigen recognition. Gamma-delta TRs recognize a variety of self and foreign non-peptide antigens frequently expressed at the epithelial boundaries between the host and external environment, including endogenous lipids presented by MH-like protein CD1D and phosphoantigens presented by butyrophilin-like molecule BTN3A1. Upon antigen recognition induces rapid, innate-like immune responses involved in pathogen clearance and tissue repair. Binding of gamma-delta TR complex to antigen triggers phosphorylation of immunoreceptor tyrosine-based activation motifs (ITAMs) in the CD3 chains by the LCK and FYN kinases, allowing the recruitment, phosphorylation, and activation of ZAP70 that facilitates phosphorylation of the scaffolding proteins LCP2 and LAT. This lead to the formation of a supramolecular signalosome that recruits the phospholipase PLCG1, resulting in calcium mobilization and ERK activation, ultimately leading to T cell expansion and differentiation into effector cells. Gamma-delta TRs are produced through somatic rearrangement of a limited repertoire of variable (V), diversity (D), and joining (J) genes. The potential diversity of gamma-delta TRs is conferred by the unique ability to rearrange (D) genes in tandem and to utilize all three reading frames. The combinatorial diversity is considerably increased by the sequence exonuclease trimming and random nucleotide (N) region additions which occur during the V-(D)-J rearrangements. The protein is T cell receptor gamma variable 2 of Homo sapiens (Human).